The sequence spans 417 residues: Putative nickel insertion protein (417 aa).

The interval 69 to 99 is disordered; that stretch reads HEHHHDHGHHHHGHGHHHDHTHDHHHHHEHR. The segment covering 74–99 has biased composition (basic residues); it reads DHGHHHHGHGHHHDHTHDHHHHHEHR.

Belongs to the LarC family.

This chain is Putative nickel insertion protein, found in Maridesulfovibrio salexigens (strain ATCC 14822 / DSM 2638 / NCIMB 8403 / VKM B-1763) (Desulfovibrio salexigens).